A 680-amino-acid chain; its full sequence is Trehalase (680 aa).

The disordered stretch occupies residues 1–27; sequence MVLHAQPPDQSTETAREAKALAGATDG.

The protein belongs to the glycosyl hydrolase 15 family. Homomultimer. Requires phosphate as cofactor.

It catalyses the reaction alpha,alpha-trehalose + H2O = alpha-D-glucose + beta-D-glucose. The protein operates within glycan degradation; trehalose degradation; D-glucose from alpha,alpha-trehalose: step 1/1. Functionally, catalyzes the hydrolysis of alpha,alpha-trehalose into two molecules of D-glucose. The chain is Trehalase from Mycobacterium tuberculosis (strain ATCC 25618 / H37Rv).